Here is a 429-residue protein sequence, read N- to C-terminus: 3-phosphoshikimate 1-carboxyvinyltransferase (429 aa).

3-phosphoshikimate contacts are provided by Lys-23, Ser-24, and Arg-28. Lys-23 serves as a coordination point for phosphoenolpyruvate. The phosphoenolpyruvate site is built by Gly-95 and Arg-123. Positions 168, 170, 316, and 343 each coordinate 3-phosphoshikimate. Gln-170 lines the phosphoenolpyruvate pocket. The Proton acceptor role is filled by Asp-316. Phosphoenolpyruvate contacts are provided by Arg-347 and Arg-389.

Belongs to the EPSP synthase family. As to quaternary structure, monomer.

The protein localises to the cytoplasm. It carries out the reaction 3-phosphoshikimate + phosphoenolpyruvate = 5-O-(1-carboxyvinyl)-3-phosphoshikimate + phosphate. It functions in the pathway metabolic intermediate biosynthesis; chorismate biosynthesis; chorismate from D-erythrose 4-phosphate and phosphoenolpyruvate: step 6/7. Its function is as follows. Catalyzes the transfer of the enolpyruvyl moiety of phosphoenolpyruvate (PEP) to the 5-hydroxyl of shikimate-3-phosphate (S3P) to produce enolpyruvyl shikimate-3-phosphate and inorganic phosphate. This is 3-phosphoshikimate 1-carboxyvinyltransferase from Bacillus cereus (strain G9842).